The primary structure comprises 610 residues: Transducer of Cdc42-dependent actin assembly protein 2 homolog (610 aa).

Residues 1-267 (MIPVSRFFTV…EVGKIDAEGD (267 aa)) enclose the F-BAR domain. The segment at 283 to 315 (APFEIEDLGDPKNCDSRTNDSADGSGGKLLKSS) is disordered. Over residues 291–302 (GDPKNCDSRTND) the composition is skewed to basic and acidic residues. In terms of domain architecture, REM-1 spans 352–429 (SKPAHVRLSC…IHNLKEFYAM (78 aa)). Residues 355–385 (AHVRLSCLRSKIRDMEKQLEQAIQGREGITR) adopt a coiled-coil conformation. Disordered stretches follow at residues 436 to 487 (EGQE…SSKN) and 499 to 519 (LISS…RRAE). Residues 437–449 (GQERSFGGRDTPD) are compositionally biased toward basic and acidic residues. The segment covering 453–464 (SMSGSSTNQSSS) has biased composition (low complexity). Over residues 475-487 (AGNSSSADDSSKN) the composition is skewed to polar residues. Over residues 501-513 (SSPKTSKSSTPTP) the composition is skewed to low complexity. One can recognise an SH3 domain in the interval 547–610 (ETAVTVTALF…VPTSYLQFPQ (64 aa)).

This sequence belongs to the FNBP1 family. Interacts (via SH3 domain) with wsp-1 and abi-1. Interacts with cdc-42 and (via SH3 domain) with wve-1.

The protein localises to the cell junction. Its subcellular location is the cell membrane. It is found in the cytoplasmic vesicle. It localises to the cytoplasm. The protein resides in the recycling endosome. In terms of biological role, plays a role in protein trafficking, actin organization and embryonic morphogenesis. Potentially acts as a cdc-42 effector. May play a role in egg laying. Together with toca-1, is required for protein trafficking regulating yolk protein clathrin-mediated endocytosis by oocytes during oogenesis and retrograde recycling and the sorting of recycling endosome cargo proteins such as mig-14. Also, together with toca-2, controls the distribution of actin at cell junctions. In Caenorhabditis elegans, this protein is Transducer of Cdc42-dependent actin assembly protein 2 homolog.